Here is a 233-residue protein sequence, read N- to C-terminus: Protein FAM204A (233 aa).

The segment at 1 to 126 (MWSGLLPPGL…HSEPSSNETQ (126 aa)) is disordered. Residues 13–24 (SDAESNSEDEAT) show a composition bias toward acidic residues. The span at 39-58 (ESIRKTEIIDFSTDEPKTET) shows a compositional bias: basic and acidic residues. Over residues 97-109 (FRGKRRKRSRKDK) the composition is skewed to basic residues. Positions 144-164 (VKRKKVEKSGLEKRIDQAVEE) form a coiled coil.

This chain is Protein FAM204A (FAM204A), found in Homo sapiens (Human).